The following is a 323-amino-acid chain: ATP synthase gamma chain (323 aa).

This sequence belongs to the ATPase gamma chain family. F-type ATPases have 2 components, CF(1) - the catalytic core - and CF(0) - the membrane proton channel. CF(1) has five subunits: alpha(3), beta(3), gamma(1), delta(1), epsilon(1). CF(0) has three main subunits: a, b and c.

The protein localises to the cell membrane. Functionally, produces ATP from ADP in the presence of a proton gradient across the membrane. The gamma chain is believed to be important in regulating ATPase activity and the flow of protons through the CF(0) complex. This is ATP synthase gamma chain from Nocardia farcinica (strain IFM 10152).